The sequence spans 88 residues: Protein GOLVEN 10 (88 aa).

A signal peptide spans 1–22 (MSSIHVASMILLLFLFLHHSDS). A propeptide spanning residues 23–75 (RHLDNVHITASRFSLVKDQNVVSSSTSKEPVKVSRFVPGPLKHHHRRPPLLFA) is cleaved from the precursor. Residues 44-88 (VSSSTSKEPVKVSRFVPGPLKHHHRRPPLLFADYPKPSTRPPRHN) form a disordered region. Position 77 is a sulfotyrosine (tyrosine 77). Position 85 is a hydroxyproline (proline 85).

Belongs to the RGF family. In terms of assembly, binds to LRR receptor-like serine/threonine-protein kinases RGI1, RGI2 and RGI3 to trigger their dimerization with SERK proteins and subsequent signaling. Expressed in roots, shoots, leaves and flowers.

It localises to the secreted. It is found in the endoplasmic reticulum. Functionally, signaling peptide (root growth factor) that maintains the postembryonic root stem cell niche. Regulates the pattern of root growth and lateral root development by modulating the length and the number of cortical cells in the root apical meristem (RAM), and the anticlinal asymmetric cell divisions in lateral root initiation cells. The protein is Protein GOLVEN 10 of Arabidopsis thaliana (Mouse-ear cress).